Consider the following 378-residue polypeptide: Cell death-related nuclease 6 (378 aa).

The N-terminal stretch at 1–17 (MIRQIILIVSLIGISNA) is a signal peptide. N-linked (GlcNAc...) asparagine glycosylation is found at asparagine 51, asparagine 92, and asparagine 111.

It belongs to the DNase II family.

Its function is as follows. Involved in apoptotic DNA degradation. The protein is Cell death-related nuclease 6 (crn-6) of Caenorhabditis elegans.